The chain runs to 296 residues: Bifunctional protein FolD (296 aa).

Residues 169–171 (GRG), Thr196, and Val237 each bind NADP(+).

The protein belongs to the tetrahydrofolate dehydrogenase/cyclohydrolase family. In terms of assembly, homodimer.

It catalyses the reaction (6R)-5,10-methylene-5,6,7,8-tetrahydrofolate + NADP(+) = (6R)-5,10-methenyltetrahydrofolate + NADPH. It carries out the reaction (6R)-5,10-methenyltetrahydrofolate + H2O = (6R)-10-formyltetrahydrofolate + H(+). Its pathway is one-carbon metabolism; tetrahydrofolate interconversion. In terms of biological role, catalyzes the oxidation of 5,10-methylenetetrahydrofolate to 5,10-methenyltetrahydrofolate and then the hydrolysis of 5,10-methenyltetrahydrofolate to 10-formyltetrahydrofolate. In Kocuria rhizophila (strain ATCC 9341 / DSM 348 / NBRC 103217 / DC2201), this protein is Bifunctional protein FolD.